Reading from the N-terminus, the 339-residue chain is MRVYYDRDADLARILDRKIAIVGYGSQGHAHALNLRDSGIKNVAVALRAGSPTAKKAEGEGLKVMTVAEAAAWADLIMILAPDEHQAAIYKNEIALNIRDGAALLFAHGLNVHFGLIEPKDTIDVLMVAPKGPGHTVRGEYQKGGGVPCLIAVHHNATGNALDLGLAYASAIGGGRSGIIETNFREECETDLFGEQAVLCGGTVELVRAGFETLVEAGYAPEMAYFECLHELKLIVDLMYEGGIANMNYSISNTAEYGEYVTGPRIITPETKAEMKRVLEDIQSGKFVRDFMLENAVGQPSFKATRRRSAEHQIEEVGARLRGMMPWIAKNKLVDQAKN.

The KARI N-terminal Rossmann domain occupies Met1–Thr182. NADP(+) is bound by residues Tyr24–Gln27, Arg48, Ser51, Thr53, and Asp83–Gln86. His108 is an active-site residue. Gly134 lines the NADP(+) pocket. Residues Asn183–Ile328 enclose the KARI C-terminal knotted domain. Mg(2+) is bound by residues Asp191, Glu195, Glu227, and Glu231. Position 252 (Ser252) interacts with substrate.

Belongs to the ketol-acid reductoisomerase family. Mg(2+) is required as a cofactor.

It catalyses the reaction (2R)-2,3-dihydroxy-3-methylbutanoate + NADP(+) = (2S)-2-acetolactate + NADPH + H(+). It carries out the reaction (2R,3R)-2,3-dihydroxy-3-methylpentanoate + NADP(+) = (S)-2-ethyl-2-hydroxy-3-oxobutanoate + NADPH + H(+). It functions in the pathway amino-acid biosynthesis; L-isoleucine biosynthesis; L-isoleucine from 2-oxobutanoate: step 2/4. It participates in amino-acid biosynthesis; L-valine biosynthesis; L-valine from pyruvate: step 2/4. In terms of biological role, involved in the biosynthesis of branched-chain amino acids (BCAA). Catalyzes an alkyl-migration followed by a ketol-acid reduction of (S)-2-acetolactate (S2AL) to yield (R)-2,3-dihydroxy-isovalerate. In the isomerase reaction, S2AL is rearranged via a Mg-dependent methyl migration to produce 3-hydroxy-3-methyl-2-ketobutyrate (HMKB). In the reductase reaction, this 2-ketoacid undergoes a metal-dependent reduction by NADPH to yield (R)-2,3-dihydroxy-isovalerate. This Caulobacter vibrioides (strain ATCC 19089 / CIP 103742 / CB 15) (Caulobacter crescentus) protein is Ketol-acid reductoisomerase (NADP(+)).